Consider the following 87-residue polypeptide: U3-theraphotoxin-Cg1b (87 aa).

The N-terminal stretch at 1-23 (MRTLTLIAIVTCAALVIFHAAAA) is a signal peptide. Positions 24 to 48 (EELEAQDVIQPEDIFTGVATLEEDR) are excised as a propeptide. Cystine bridges form between cysteine 52–cysteine 65, cysteine 56–cysteine 79, and cysteine 73–cysteine 84.

This sequence belongs to the neurotoxin 12 (Hwtx-2) family. 03 (juruin) subfamily. As to expression, expressed by the venom gland.

It is found in the secreted. In terms of biological role, probable ion channel inhibitor. The protein is U3-theraphotoxin-Cg1b of Chilobrachys guangxiensis (Chinese earth tiger tarantula).